The following is a 718-amino-acid chain: Polyribonucleotide nucleotidyltransferase (718 aa).

Positions 496 and 502 each coordinate Mg(2+). A KH domain is found at 563–622; it reads PRLLTIKIDSDMIGLVIGPGGKTIKGITEETGAKIDIEDDGTVTISAVDENKAKRARNII. An S1 motif domain is found at 632–700; it reads GDVYAGRITR…NKGRINLTRL (69 aa).

It belongs to the polyribonucleotide nucleotidyltransferase family. Requires Mg(2+) as cofactor.

The protein resides in the cytoplasm. The catalysed reaction is RNA(n+1) + phosphate = RNA(n) + a ribonucleoside 5'-diphosphate. Functionally, involved in mRNA degradation. Catalyzes the phosphorolysis of single-stranded polyribonucleotides processively in the 3'- to 5'-direction. The chain is Polyribonucleotide nucleotidyltransferase from Nostoc punctiforme (strain ATCC 29133 / PCC 73102).